We begin with the raw amino-acid sequence, 343 residues long: Phosphoribosylformylglycinamidine cyclo-ligase (343 aa).

The protein belongs to the AIR synthase family.

The protein resides in the cytoplasm. It catalyses the reaction 2-formamido-N(1)-(5-O-phospho-beta-D-ribosyl)acetamidine + ATP = 5-amino-1-(5-phospho-beta-D-ribosyl)imidazole + ADP + phosphate + H(+). It participates in purine metabolism; IMP biosynthesis via de novo pathway; 5-amino-1-(5-phospho-D-ribosyl)imidazole from N(2)-formyl-N(1)-(5-phospho-D-ribosyl)glycinamide: step 2/2. This is Phosphoribosylformylglycinamidine cyclo-ligase from Rippkaea orientalis (strain PCC 8801 / RF-1) (Cyanothece sp. (strain PCC 8801)).